A 270-amino-acid polypeptide reads, in one-letter code: Glutamate racemase (270 aa).

Substrate contacts are provided by residues Asp13–Ser14 and Tyr45–Gly46. Residue Cys77 is the Proton donor/acceptor of the active site. Asn78–Thr79 lines the substrate pocket. Catalysis depends on Cys185, which acts as the Proton donor/acceptor. Thr186–His187 contacts substrate.

It belongs to the aspartate/glutamate racemases family.

It carries out the reaction L-glutamate = D-glutamate. It functions in the pathway cell wall biogenesis; peptidoglycan biosynthesis. Provides the (R)-glutamate required for cell wall biosynthesis. The chain is Glutamate racemase from Vibrio parahaemolyticus serotype O3:K6 (strain RIMD 2210633).